Consider the following 184-residue polypeptide: MKINKKNLIWIDLEMTGLNPKVHRIIEIATLITDTNLNIIAEGPVIPIYQKKEHILVMDEWNKRIHENNGLIKRVEKSLYNEQKAEHETILFLKKWVPIQVSPMCGNSIAQDRRFLFQYMPHLENYFHYRYIDVSTIKELAYRWNPSILDKFKKNHYHKALEDIRESVVELNFYKKNFLKFKKK.

Positions 8 to 171 constitute an Exonuclease domain; that stretch reads LIWIDLEMTG…EDIRESVVEL (164 aa). The active site involves tyrosine 129.

The protein belongs to the oligoribonuclease family.

Its subcellular location is the cytoplasm. 3'-to-5' exoribonuclease specific for small oligoribonucleotides. The protein is Oligoribonuclease of Buchnera aphidicola subsp. Acyrthosiphon pisum (strain APS) (Acyrthosiphon pisum symbiotic bacterium).